Consider the following 125-residue polypeptide: Synaptobrevin (125 aa).

A disordered region spans residues 1-46; it reads MSGPQNPQAGPGGPPSGPPQPGGPPGPPQGPPQPVQQSKRLQQTQA. Topologically, residues 1–103 are cytoplasmic; that stretch reads MSGPQNPQAG…KRKFWWKNCK (103 aa). A compositionally biased stretch (pro residues) spans 12–34; that stretch reads GGPPSGPPQPGGPPGPPQGPPQP. One can recognise a v-SNARE coiled-coil homology domain in the interval 40–100; it reads RLQQTQAQVE…GKLKRKFWWK (61 aa). Residues 104 to 123 traverse the membrane as a helical; Anchor for type IV membrane protein segment; the sequence is MMIILGGIVAVIVTVIIVWA. Over 124–125 the chain is Vesicular; it reads AT.

The protein belongs to the synaptobrevin family.

The protein localises to the cytoplasmic vesicle. It localises to the secretory vesicle. Its subcellular location is the synaptic vesicle membrane. It is found in the synapse. The protein resides in the synaptosome. Intrinsic membrane protein of small synaptic vesicles. The chain is Synaptobrevin from Doryteuthis pealeii (Longfin inshore squid).